We begin with the raw amino-acid sequence, 86 residues long: Exodeoxyribonuclease 7 small subunit (86 aa).

Residues 1–27 (MQDELFETEKIPPKNTKNAKNAPKKSF) form a disordered region.

This sequence belongs to the XseB family. Heterooligomer composed of large and small subunits.

It localises to the cytoplasm. The catalysed reaction is Exonucleolytic cleavage in either 5'- to 3'- or 3'- to 5'-direction to yield nucleoside 5'-phosphates.. Bidirectionally degrades single-stranded DNA into large acid-insoluble oligonucleotides, which are then degraded further into small acid-soluble oligonucleotides. The protein is Exodeoxyribonuclease 7 small subunit of Helicobacter pylori (strain G27).